The following is a 234-amino-acid chain: Conidial surface nicotinamide adenine dinucleotide glycohydrolase nadA (234 aa).

Positions 1–20 (MIFTNAILVISALLPATVLS) are cleaved as a signal peptide. A thump region spans residues 21-117 (LQHTEDSLFP…LDTEEQPILG (97 aa)). 2 cysteine pairs are disulfide-bonded: Cys-33–Cys-80 and Cys-38–Cys-50. N-linked (GlcNAc...) asparagine glycosylation is found at Asn-45, Asn-95, and Asn-118. Residues 120–212 (TLPVGMKLDR…GLIDDGYLRR (93 aa)) enclose the TNT domain. Residue Arg-129 is part of the active site. Positions 130, 136, and 148 each coordinate NAD(+). Gln-194 is an active-site residue. Residues Ser-216, Asp-219, Glu-220, and Glu-223 each contribute to the Ca(2+) site.

This sequence belongs to the fungal surface NADase family. Homodimer. In terms of processing, N-glycosylated.

It is found in the secreted. The enzyme catalyses NAD(+) + H2O = ADP-D-ribose + nicotinamide + H(+). The catalysed reaction is NADP(+) + H2O = ADP-D-ribose 2'-phosphate + nicotinamide + H(+). The catalytic activity is positively regulated by calcium via its binding to the calcium-binding site. Functionally, conidial surface nicotinamide adenine dinucleotide glycohydrolase that cleave NAD(+) and NADP(+) but not their reduced counterparts, NADH and NADPH. Lacks both ADP-ribosyl cyclase and base exchange activity and does not mediate synthesis of calcium messengers cADPR or NAADP. Plays a role in pathogenicity by depleting the host's NAD(+) pool. The chain is Conidial surface nicotinamide adenine dinucleotide glycohydrolase nadA from Aspergillus fumigatus (strain ATCC MYA-4609 / CBS 101355 / FGSC A1100 / Af293) (Neosartorya fumigata).